The chain runs to 102 residues: MSRRCELTAKGPQVGHKVSHSNIKTKRRFLPNLCNVTFISDALGRNVRLRVSTNAIKSVDHNGGLDAYLLKANAATLSPRALELKRAIEKKAAEAAPVAKAS.

Residues 1-20 form a disordered region; it reads MSRRCELTAKGPQVGHKVSH.

Belongs to the bacterial ribosomal protein bL28 family.

In Bradyrhizobium sp. (strain BTAi1 / ATCC BAA-1182), this protein is Large ribosomal subunit protein bL28.